The chain runs to 128 residues: Aspartate 1-decarboxylase (128 aa).

Ser-25 serves as the catalytic Schiff-base intermediate with substrate; via pyruvic acid. At Ser-25 the chain carries Pyruvic acid (Ser). Residue Thr-57 participates in substrate binding. Tyr-58 serves as the catalytic Proton donor. 73 to 75 (GSA) is a substrate binding site.

This sequence belongs to the PanD family. As to quaternary structure, heterooctamer of four alpha and four beta subunits. It depends on pyruvate as a cofactor. Post-translationally, is synthesized initially as an inactive proenzyme, which is activated by self-cleavage at a specific serine bond to produce a beta-subunit with a hydroxyl group at its C-terminus and an alpha-subunit with a pyruvoyl group at its N-terminus.

Its subcellular location is the cytoplasm. The catalysed reaction is L-aspartate + H(+) = beta-alanine + CO2. It functions in the pathway cofactor biosynthesis; (R)-pantothenate biosynthesis; beta-alanine from L-aspartate: step 1/1. In terms of biological role, catalyzes the pyruvoyl-dependent decarboxylation of aspartate to produce beta-alanine. The polypeptide is Aspartate 1-decarboxylase (Burkholderia mallei (strain NCTC 10247)).